The following is a 354-amino-acid chain: UDP-N-acetylglucosamine--N-acetylmuramyl-(pentapeptide) pyrophosphoryl-undecaprenol N-acetylglucosamine transferase (354 aa).

UDP-N-acetyl-alpha-D-glucosamine contacts are provided by residues 11–13 (TAG), arginine 164, serine 194, and glutamine 289.

It belongs to the glycosyltransferase 28 family. MurG subfamily.

It is found in the cell membrane. It carries out the reaction di-trans,octa-cis-undecaprenyl diphospho-N-acetyl-alpha-D-muramoyl-L-alanyl-D-glutamyl-meso-2,6-diaminopimeloyl-D-alanyl-D-alanine + UDP-N-acetyl-alpha-D-glucosamine = di-trans,octa-cis-undecaprenyl diphospho-[N-acetyl-alpha-D-glucosaminyl-(1-&gt;4)]-N-acetyl-alpha-D-muramoyl-L-alanyl-D-glutamyl-meso-2,6-diaminopimeloyl-D-alanyl-D-alanine + UDP + H(+). It participates in cell wall biogenesis; peptidoglycan biosynthesis. In terms of biological role, cell wall formation. Catalyzes the transfer of a GlcNAc subunit on undecaprenyl-pyrophosphoryl-MurNAc-pentapeptide (lipid intermediate I) to form undecaprenyl-pyrophosphoryl-MurNAc-(pentapeptide)GlcNAc (lipid intermediate II). The polypeptide is UDP-N-acetylglucosamine--N-acetylmuramyl-(pentapeptide) pyrophosphoryl-undecaprenol N-acetylglucosamine transferase (Clostridium botulinum (strain Kyoto / Type A2)).